A 346-amino-acid chain; its full sequence is Methionine import ATP-binding protein MetN 1 (346 aa).

Residues 2–241 (IELKNVSKVF…PQHVTTKKFV (240 aa)) enclose the ABC transporter domain. Residue 38–45 (GYSGAGKS) coordinates ATP.

The protein belongs to the ABC transporter superfamily. Methionine importer (TC 3.A.1.24) family. In terms of assembly, the complex is composed of two ATP-binding proteins (MetN), two transmembrane proteins (MetI) and a solute-binding protein (MetQ).

The protein resides in the cell membrane. The enzyme catalyses L-methionine(out) + ATP + H2O = L-methionine(in) + ADP + phosphate + H(+). It carries out the reaction D-methionine(out) + ATP + H2O = D-methionine(in) + ADP + phosphate + H(+). Part of the ABC transporter complex MetNIQ involved in methionine import. Responsible for energy coupling to the transport system. The polypeptide is Methionine import ATP-binding protein MetN 1 (Bacillus cereus (strain ATCC 14579 / DSM 31 / CCUG 7414 / JCM 2152 / NBRC 15305 / NCIMB 9373 / NCTC 2599 / NRRL B-3711)).